The following is a 392-amino-acid chain: LL-diaminopimelate aminotransferase (392 aa).

Substrate contacts are provided by Y13 and G38. Pyridoxal 5'-phosphate-binding positions include Y67, 102–103 (SK), Y127, N177, Y208, and 236–238 (SCS). K103, Y127, and N177 together coordinate substrate. K239 bears the N6-(pyridoxal phosphate)lysine mark. Position 247 (R247) interacts with pyridoxal 5'-phosphate. R366 provides a ligand contact to substrate.

It belongs to the class-I pyridoxal-phosphate-dependent aminotransferase family. LL-diaminopimelate aminotransferase subfamily. Homodimer. The cofactor is pyridoxal 5'-phosphate.

It carries out the reaction (2S,6S)-2,6-diaminopimelate + 2-oxoglutarate = (S)-2,3,4,5-tetrahydrodipicolinate + L-glutamate + H2O + H(+). It participates in amino-acid biosynthesis; L-lysine biosynthesis via DAP pathway; LL-2,6-diaminopimelate from (S)-tetrahydrodipicolinate (aminotransferase route): step 1/1. Involved in the synthesis of meso-diaminopimelate (m-DAP or DL-DAP), required for both lysine and peptidoglycan biosynthesis. Catalyzes the direct conversion of tetrahydrodipicolinate to LL-diaminopimelate. Can also use m-DAP instead of LL-DAP as the amino-group donor. In Gloeobacter violaceus (strain ATCC 29082 / PCC 7421), this protein is LL-diaminopimelate aminotransferase.